The primary structure comprises 125 residues: Fatty acid-binding protein, liver-type (125 aa).

Belongs to the calycin superfamily. Fatty-acid binding protein (FABP) family.

The protein resides in the cytoplasm. The polypeptide is Fatty acid-binding protein, liver-type (fabp1) (Takifugu rubripes (Japanese pufferfish)).